Reading from the N-terminus, the 500-residue chain is Lysine--tRNA ligase (500 aa).

2 residues coordinate Mg(2+): glutamate 407 and glutamate 414.

Belongs to the class-II aminoacyl-tRNA synthetase family. As to quaternary structure, homodimer. The cofactor is Mg(2+).

It is found in the cytoplasm. The catalysed reaction is tRNA(Lys) + L-lysine + ATP = L-lysyl-tRNA(Lys) + AMP + diphosphate. The polypeptide is Lysine--tRNA ligase (Azobacteroides pseudotrichonymphae genomovar. CFP2).